A 515-amino-acid polypeptide reads, in one-letter code: Envelope glycoprotein (515 aa).

The signal sequence occupies residues 1–33 (MPKERRSRRRPQPIIRWVSLTLTLLALCQPIQT). The Extracellular segment spans residues 34–435 (WRCSLSLGNQ…LGLTAWVRET (402 aa)). Asn129 and Asn203 each carry an N-linked (GlcNAc...) asparagine; by host glycan. The CXXC motif lies at 212–215 (CAIC). Disulfide bonds link Cys212–Cys215, Cys212–Cys392, and Cys384–Cys391. N-linked (GlcNAc...) asparagine; by host glycosylation is found at Asn230, Asn251, Asn256, Asn271, and Asn287. A fusion peptide region spans residues 304–324 (VAALTLGLALSVGLTGINVAV). Coiled-coil stretches lie at residues 330 to 376 (QRLT…WLYI) and 388 to 420 (NEPC…DWQW). A glycan (N-linked (GlcNAc...) asparagine; by host) is linked at Asn351. The interval 365–381 (AQNRRGLDWLYIRLGFQ) is immunosuppression. A CX6CC motif is present at residues 384-392 (CPTINEPCC). N-linked (GlcNAc...) asparagine; by host glycosylation occurs at Asn398. A helical membrane pass occupies residues 436-456 (IHSVLSLFLLALFLLFLAPCL). Cys455 is lipidated: S-palmitoyl cysteine; by host. At 457–515 (IKCLTSRLLKLLRQAPHFPEISFPPKPDSDYQALLPSAPEIYSHLSPTKPDYINLRPCP) the chain is on the cytoplasmic side.

As to quaternary structure, the mature envelope protein (Env) consists of a trimer of SU-TM heterodimers attached by a labile interchain disulfide bond. Specific enzymatic cleavages in vivo yield mature proteins. Envelope glycoproteins are synthesized as an inactive precursor that is N-glycosylated and processed likely by host cell furin or by a furin-like protease in the Golgi to yield the mature SU and TM proteins. The cleavage site between SU and TM requires the minimal sequence [KR]-X-[KR]-R. Post-translationally, the CXXC motif is highly conserved across a broad range of retroviral envelope proteins. It is thought to participate in the formation of a labile disulfide bond possibly with the CX6CC motif present in the transmembrane protein. Isomerization of the intersubunit disulfide bond to an SU intrachain disulfide bond is thought to occur upon receptor recognition in order to allow membrane fusion. In terms of processing, the transmembrane protein is palmitoylated.

It localises to the virion membrane. The protein localises to the host cell membrane. Its function is as follows. The surface protein (SU) attaches the virus to the host cell by binding to its receptor. This interaction triggers the refolding of the transmembrane protein (TM) and is thought to activate its fusogenic potential by unmasking its fusion peptide. Fusion occurs at the host cell plasma membrane. The transmembrane protein (TM) acts as a class I viral fusion protein. Under the current model, the protein has at least 3 conformational states: pre-fusion native state, pre-hairpin intermediate state, and post-fusion hairpin state. During viral and target cell membrane fusion, the coiled coil regions (heptad repeats) assume a trimer-of-hairpins structure, positioning the fusion peptide in close proximity to the C-terminal region of the ectodomain. The formation of this structure appears to drive apposition and subsequent fusion of viral and target cell membranes. Membranes fusion leads to delivery of the nucleocapsid into the cytoplasm. The sequence is that of Envelope glycoprotein (env) from Bovine leukemia virus (isolate Belgium LB59) (BLV).